Here is a 155-residue protein sequence, read N- to C-terminus: Ribonuclease H (155 aa).

Residues N4–K146 form the RNase H type-1 domain. Mg(2+)-binding residues include D13, E51, D73, and D138.

Belongs to the RNase H family. Monomer. The cofactor is Mg(2+).

It localises to the cytoplasm. The enzyme catalyses Endonucleolytic cleavage to 5'-phosphomonoester.. In terms of biological role, endonuclease that specifically degrades the RNA of RNA-DNA hybrids. This is Ribonuclease H from Thermoanaerobacter pseudethanolicus (strain ATCC 33223 / 39E) (Clostridium thermohydrosulfuricum).